The primary structure comprises 498 residues: Elastase (498 aa).

The N-terminal stretch at 1 to 23 (MKKVSTLDLLFVAIMGVSPAAFA) is a signal peptide. Residues 24–197 (ADLIDVSKLP…VLDQWEGLAH (174 aa)) constitute a propeptide that is removed on maturation. Cys-227 and Cys-255 are joined by a disulfide. Asp-333 provides a ligand contact to Ca(2+). His-337 contacts Zn(2+). Glu-338 is an active-site residue. Positions 341 and 361 each coordinate Zn(2+). Residues Glu-369, Glu-372, Asp-380, and Leu-382 each coordinate Ca(2+). The active-site Proton donor is His-420. Cysteines 467 and 494 form a disulfide.

It belongs to the peptidase M4 family. As to quaternary structure, monomer. The cofactor is Ca(2+). Zn(2+) is required as a cofactor. Post-translationally, made as a membrane-associated pre-pro-protein, which is exported to the periplasm (yielding pro-elastase) with removal of the signal peptide. Under certain conditions pro-elastase can accumulate. The pro-peptide is removed in the periplasm yielding a (mature length) 33 kDa protein, probably by autocatalysis. The pro-peptide probably remains associated with elastase and can be secreted. Further alterations (perhaps processing) seems to be required before secretion into the extracellular space.

It is found in the secreted. It catalyses the reaction Hydrolysis of proteins including elastin, collagen types III and IV, fibronectin and immunoglobulin A, generally with bulky hydrophobic group at P1'. Insulin B chain cleavage pattern identical to that of thermolysin, but specificity differs in other respects.. With respect to regulation, inhibited by phosphoramidon. Cleaves host elastin, collagen, IgG, and several complement components as well as endogenous pro-aminopeptidase. Autocatalyses processing of its pro-peptide. Processes the pro-peptide of pro-chitin-binding protein (cbpD). Involved in the pathogenesis of P.aeruginosa infections. The polypeptide is Elastase (lasB) (Pseudomonas aeruginosa (strain ATCC 15692 / DSM 22644 / CIP 104116 / JCM 14847 / LMG 12228 / 1C / PRS 101 / PAO1)).